A 280-amino-acid polypeptide reads, in one-letter code: MSINLNELVDSLIQSAPPAELKQVSQSLSSLTKGTSTSSTNSLIQDSIEQYAQENIISIDNIIISKYNKDENSSKYIDYVNNKLFNVDWQNQKIIDVESYHDNNNKRGSNYDELIQKLSQYGDDYYPSNFAFTVIPESEDQLRVIIIGQRANHDNFYTGQWKSNYLITEQGIKGNIDLDIHYFEDGNVRLKFNESINSSNNNNNSSTLQSGNLINNASRIVNFINEQENATMVKIIEQFNNLNQKSFKNLRRLLPVTRSKINWGSAIGNYRLGSDVINKK.

It belongs to the F-actin-capping protein alpha subunit family. As to quaternary structure, heterodimer of an alpha and a beta subunit.

It localises to the cytoplasm. The protein resides in the cytoskeleton. F-actin-capping proteins bind in a Ca(2+)-independent manner to the fast growing ends of actin filaments (barbed end) thereby blocking the exchange of subunits at these ends. Unlike other capping proteins (such as gelsolin and severin), these proteins do not sever actin filaments. The chain is F-actin-capping protein subunit alpha (CAP01) from Candida albicans (strain SC5314 / ATCC MYA-2876) (Yeast).